We begin with the raw amino-acid sequence, 617 residues long: Chaperone protein HscA homolog (617 aa).

It belongs to the heat shock protein 70 family.

In terms of biological role, probable chaperone. Has a low intrinsic ATPase activity which is markedly stimulated by HscB. This Vibrio vulnificus (strain CMCP6) protein is Chaperone protein HscA homolog.